The chain runs to 229 residues: MKPPIILINYKAYENSYGEKGVEISKKIEKVSKDYGVPIIISVPATMIYKLSQILEIPVYAQHVDALRHGAHTGAILPEMIKDAGAKGSLLNHSERKIRLDEIHEAVTRIRDLGLESVVCADSYELVHPLALLKPNAILIEPPELIGSGRAVSKEKPEVITRAVNEIKKVEGVYLIAGAGITTGEDVYKAIELGADGIGVASAVMKSSTPEKIVEDFIINALKAIDRKK.

Position 9 to 11 (Asn9 to Lys11) interacts with substrate. His93 functions as the Electrophile in the catalytic mechanism. The Proton acceptor role is filled by Glu141. Substrate is bound by residues Ile146, Gly180, and Ala201–Ser202.

This sequence belongs to the triosephosphate isomerase family. As to quaternary structure, homotetramer; dimer of dimers.

It localises to the cytoplasm. The enzyme catalyses D-glyceraldehyde 3-phosphate = dihydroxyacetone phosphate. It functions in the pathway carbohydrate biosynthesis; gluconeogenesis. The protein operates within carbohydrate degradation; glycolysis; D-glyceraldehyde 3-phosphate from glycerone phosphate: step 1/1. In terms of biological role, involved in the gluconeogenesis. Catalyzes stereospecifically the conversion of dihydroxyacetone phosphate (DHAP) to D-glyceraldehyde-3-phosphate (G3P). The protein is Triosephosphate isomerase of Sulfurisphaera tokodaii (strain DSM 16993 / JCM 10545 / NBRC 100140 / 7) (Sulfolobus tokodaii).